The chain runs to 64 residues: Prokaryotic ubiquitin-like protein Pup (64 aa).

Over residues 1–11 (MAQEQTKRTGG) the composition is skewed to basic and acidic residues. Positions 1–38 (MAQEQTKRTGGGDEDDTPGGDGAAGQERREKLAEDTDD) are disordered. The interval 21-58 (DGAAGQERREKLAEDTDDLLDEIDDVLEENAEDFVRAY) is ARC ATPase binding. Residues 24–52 (AGQERREKLAEDTDDLLDEIDDVLEENAE) adopt a coiled-coil conformation. Gln64 bears the Deamidated glutamine mark. Residue Gln64 forms an Isoglutamyl lysine isopeptide (Gln-Lys) (interchain with K-? in acceptor proteins) linkage.

Belongs to the prokaryotic ubiquitin-like protein family. As to quaternary structure, strongly interacts with the proteasome-associated ATPase ARC through a hydrophobic interface; the interacting region of Pup lies in its C-terminal half. There is one Pup binding site per ARC hexamer ring. In terms of processing, is modified by deamidation of its C-terminal glutamine to glutamate by the deamidase Dop, a prerequisite to the subsequent pupylation process.

It participates in protein degradation; proteasomal Pup-dependent pathway. Functionally, protein modifier that is covalently attached to lysine residues of substrate proteins, thereby targeting them for proteasomal degradation. The tagging system is termed pupylation. This is Prokaryotic ubiquitin-like protein Pup from Rhodococcus opacus (strain B4).